Reading from the N-terminus, the 573-residue chain is uncharacterized protein (573 aa).

Disordered regions lie at residues 1–33 (MLQQGSSSRRSLHGNDFHTLTSPSRRDSLSIPR) and 60–101 (LVAN…SRYD). The span at 60 to 70 (LVANRSDNNGN) shows a compositional bias: polar residues. N-linked (GlcNAc...) asparagine glycosylation occurs at Asn63. The segment covering 84 to 95 (SSSTSSLPSTRN) has biased composition (low complexity). Repeat copies occupy residues 102-103 (NM), 104-105 (NM), 106-107 (NM), 108-109 (NM), 110-111 (NM), 112-113 (NM), 114-115 (NM), 116-117 (NM), 118-119 (NM), and 120-121 (NM). Residues 102-121 (NMNMNMNMNMNMNMNMNMNM) form a 10 X 2 AA tandem repeats of N-M region. Asn123 is a glycosylation site (N-linked (GlcNAc...) asparagine). Disordered regions lie at residues 150-174 (IPEKYSGSRYSLRSSPPTYSNPRVR), 192-271 (QFPN…IRSN), 286-317 (KSSNSADSVEENSKTKQKRKNPERVVPEPITS), and 357-379 (NNRIPVLPPPRSPNRPTLSDKRT). Residues 157–170 (SRYSLRSSPPTYSN) are compositionally biased toward polar residues. The segment covering 208–225 (LPPSSTFPDSPSSSSLPL) has biased composition (low complexity). The segment covering 226 to 252 (TQTGGPSSADNDSIATGTNNRSPQQTK) has biased composition (polar residues). Residue Asn236 is glycosylated (N-linked (GlcNAc...) asparagine). N-linked (GlcNAc...) asparagine glycans are attached at residues Asn437 and Asn442. 2 stretches are compositionally biased toward low complexity: residues 441–457 (INSSISSPAPSSSSSSS) and 466–483 (SISSSPTPAPSSGSSKSK). The tract at residues 441-483 (INSSISSPAPSSSSSSSLVSRGPMQSISSSPTPAPSSGSSKSK) is disordered. Residues Asn498, Asn535, and Asn541 are each glycosylated (N-linked (GlcNAc...) asparagine).

To yeast AFR1. N-glycosylated.

This is an uncharacterized protein from Saccharomyces cerevisiae (strain ATCC 204508 / S288c) (Baker's yeast).